The sequence spans 788 residues: Glucan 1,3-beta-glucosidase (788 aa).

The N-terminal stretch at 1 to 42 is a signal peptide; the sequence is MRFSSLLACLGAVGIQAAAIPFQRRVDNTTDSGSLDAAQAAA. Residues asparagine 28, asparagine 233, asparagine 381, and asparagine 773 are each glycosylated (N-linked (GlcNAc...) asparagine).

The protein belongs to the glycosyl hydrolase 55 family.

It catalyses the reaction Successive hydrolysis of beta-D-glucose units from the non-reducing ends of (1-&gt;3)-beta-D-glucans, releasing alpha-glucose.. The polypeptide is Glucan 1,3-beta-glucosidase (EXG1) (Cochliobolus carbonum (Maize leaf spot fungus)).